We begin with the raw amino-acid sequence, 146 residues long: ATP synthase epsilon chain (146 aa).

It belongs to the ATPase epsilon chain family. In terms of assembly, F-type ATPases have 2 components, CF(1) - the catalytic core - and CF(0) - the membrane proton channel. CF(1) has five subunits: alpha(3), beta(3), gamma(1), delta(1), epsilon(1). CF(0) has three main subunits: a, b and c.

The protein resides in the cell inner membrane. Functionally, produces ATP from ADP in the presence of a proton gradient across the membrane. In Rhodospirillum centenum (strain ATCC 51521 / SW), this protein is ATP synthase epsilon chain.